The primary structure comprises 552 residues: Beta-hexosaminidase A (552 aa).

The first 15 residues, 1–15 (MRLIVLSLLFTSTLA), serve as a signal peptide directing secretion. N-linked (GlcNAc...) asparagine glycosylation occurs at Asn-44. Catalysis depends on Glu-322, which acts as the Proton donor. N-linked (GlcNAc...) asparagine glycosylation is found at Asn-348, Asn-409, and Asn-457.

This sequence belongs to the glycosyl hydrolase 20 family.

It is found in the lysosome. The enzyme catalyses Hydrolysis of terminal non-reducing N-acetyl-D-hexosamine residues in N-acetyl-beta-D-hexosaminides.. Functionally, responsible for the degradation of GM2 gangliosides, and a variety of other molecules containing terminal N-acetyl hexosamines. Degrades chitotriose. The protein is Beta-hexosaminidase A of Caenorhabditis briggsae.